Reading from the N-terminus, the 219-residue chain is uncharacterized protein (219 aa).

Residues 4–79 enclose the ACT domain; the sequence is GLRIIAENKI…YIIEIEEEES (76 aa).

This is an uncharacterized protein from Archaeoglobus fulgidus (strain ATCC 49558 / DSM 4304 / JCM 9628 / NBRC 100126 / VC-16).